A 471-amino-acid polypeptide reads, in one-letter code: Ubiquitin carboxyl-terminal hydrolase 8 (471 aa).

12 residues coordinate Zn(2+): Cys4, His6, Cys46, Cys49, Cys60, Cys63, Cys68, His73, His77, His83, Cys96, and Cys99. Residues 22–122 (KTCNAARYIL…ILAKYWDDVC (101 aa)) form a UBP-type; degenerate zinc finger. Residues 137 to 468 (SGLINMGSTC…QAYLLFYTIR (332 aa)) form the USP domain. Residue Cys146 is the Nucleophile of the active site. Residues His170, Cys174, Cys182, Cys185, His250, Cys271, Cys273, His276, Cys289, Cys292, Cys336, and Cys339 each coordinate Zn(2+). The active-site Proton acceptor is the His427.

The protein belongs to the peptidase C19 family. UBP8 subfamily. As to quaternary structure, component of the 1.8 MDa SAGA (Spt-Ada-Gcn5 acetyltransferase) complex, which is composed of 19 subunits TRA1, SPT7, TAF5, NGG1/ADA3, SGF73, SPT20/ADA5, SPT8, TAF12, TAF6, HFI1/ADA1, UBP8, GCN5, ADA2, SPT3, SGF29, TAF10, TAF9, SGF11 and SUS1. The SAGA complex is composed of 4 modules, namely the HAT (histone acetyltransferase) module (GCN5, ADA2, NGG1/ADA3 and SGF29), the DUB (deubiquitinating) module (UBP8, SGF11, SGF73 and SUS1), the core or TAF (TBP-associated factor) module (TAF5, TAF6, TAF9, TAF10 and TAF12), and the Tra1 or SPT (Suppressor of Ty) module (TRA1, HFI1/ADA1, SPT3, SPT7, SPT8 and SPT20/ADA5). The Tra1/SPT module binds activators, the core module recruits TBP (TATA-binding protein), the HAT module contains the histone H3 acetyltransferase GCN5, and the DUB module comprises the histone H2B deubiquitinase UBP8. Also identified in an altered form of SAGA, named SALSA (SAGA altered, Spt8 absent) or SLIK (SAGA-like) complex, which contains a C-terminal truncated form of SPT7 and is missing SPT8. However, it has been shown that the SAGA and SAGA-like SALSA/SLIK transcriptional coactivators are structurally and biochemically equivalent.

It is found in the nucleus. It catalyses the reaction Thiol-dependent hydrolysis of ester, thioester, amide, peptide and isopeptide bonds formed by the C-terminal Gly of ubiquitin (a 76-residue protein attached to proteins as an intracellular targeting signal).. Functionally, histone deubiquitinating enzyme component of the transcription coactivator SAGA complex. SAGA acts as a general cofactor required for essentially all RNA polymerase II transcription. At the promoters, SAGA is required for transcription pre-initiation complex (PIC) recruitment. It influences RNA polymerase II transcriptional activity through different activities such as TBP interaction (via core/TAF module) and promoter selectivity, interaction with transcription activators (via Tra1/SPT module), and chromatin modification through histone acetylation (via HAT module) and deubiquitination (via DUB module). SAGA preferentially acetylates histones H3 (to form H3K9ac, H3K14ac, H3K18ac and H3K23ac) and H2B and deubiquitinates histone H2B. SAGA interacts with DNA via upstream activating sequences (UASs). Also identified in a modified version of SAGA named SALSA or SLIK. The cleavage of SPT7 and the absence of the SPT8 subunit in SLIK neither drive any major conformational differences in its structure compared with SAGA, nor significantly affect HAT, DUB, or DNA-binding activities. Within the DUB module, the correctly positioned zinc finger domains of SGF11 and SGF73 are both required to fully activate the ubiquitin hydrolase UBP8. The DUB module is also linked to the splicing efficiency of many transcripts. The chain is Ubiquitin carboxyl-terminal hydrolase 8 (UBP8) from Saccharomyces cerevisiae (strain ATCC 204508 / S288c) (Baker's yeast).